The chain runs to 462 residues: Trigger factor (462 aa).

The region spanning 163-248 (GDEVLFDFKG…LKEVRRVNSL (86 aa)) is the PPIase FKBP-type domain. Residues 442-462 (SMQEKQTQEPAEEKVETKEEK) form a disordered region. Residues 452-462 (AEEKVETKEEK) are compositionally biased toward basic and acidic residues.

Belongs to the FKBP-type PPIase family. Tig subfamily.

It localises to the cytoplasm. It carries out the reaction [protein]-peptidylproline (omega=180) = [protein]-peptidylproline (omega=0). In terms of biological role, involved in protein export. Acts as a chaperone by maintaining the newly synthesized protein in an open conformation. Functions as a peptidyl-prolyl cis-trans isomerase. The protein is Trigger factor of Mycoplasmopsis synoviae (strain 53) (Mycoplasma synoviae).